Here is a 240-residue protein sequence, read N- to C-terminus: Uridylate kinase (240 aa).

12–15 (KLSG) contacts ATP. Gly-54 is a binding site for UMP. ATP contacts are provided by Gly-55 and Arg-59. UMP is bound by residues Asp-74 and 135–142 (TGNPFFTT). ATP is bound by residues Thr-162, Tyr-168, and Asp-171.

The protein belongs to the UMP kinase family. Homohexamer.

It localises to the cytoplasm. The catalysed reaction is UMP + ATP = UDP + ADP. Its pathway is pyrimidine metabolism; CTP biosynthesis via de novo pathway; UDP from UMP (UMPK route): step 1/1. Its activity is regulated as follows. Inhibited by UTP. In terms of biological role, catalyzes the reversible phosphorylation of UMP to UDP. The protein is Uridylate kinase of Xanthomonas campestris pv. campestris (strain ATCC 33913 / DSM 3586 / NCPPB 528 / LMG 568 / P 25).